We begin with the raw amino-acid sequence, 454 residues long: UDP-N-acetylmuramoylalanine--D-glutamate ligase (454 aa).

Residue 119 to 125 (GSNGKTT) coordinates ATP.

This sequence belongs to the MurCDEF family.

It is found in the cytoplasm. It catalyses the reaction UDP-N-acetyl-alpha-D-muramoyl-L-alanine + D-glutamate + ATP = UDP-N-acetyl-alpha-D-muramoyl-L-alanyl-D-glutamate + ADP + phosphate + H(+). Its pathway is cell wall biogenesis; peptidoglycan biosynthesis. Cell wall formation. Catalyzes the addition of glutamate to the nucleotide precursor UDP-N-acetylmuramoyl-L-alanine (UMA). The sequence is that of UDP-N-acetylmuramoylalanine--D-glutamate ligase from Latilactobacillus sakei subsp. sakei (strain 23K) (Lactobacillus sakei subsp. sakei).